A 402-amino-acid chain; its full sequence is CMP-sialic acid transporter 3 (402 aa).

Over 1–42 (MSGEVECRVCHAKVQVPMAAAAVSKAYDIHRSSVSSRQRALN) the chain is Cytoplasmic. A helical transmembrane segment spans residues 43–63 (VLLVSGDCVLAGLQPILVYMC). At 64 to 73 (KVDGKFKFSP) the chain is on the lumenal side. A helical transmembrane segment spans residues 74–94 (VSVNFLTEITKIIFAIIMLCI). The Cytoplasmic segment spans residues 95–118 (QARRLKVGEKPFLTVSTFMQAARN). Residues 119–139 (NVLLAVPALFYAINNYMKFVM) form a helical membrane-spanning segment. Residues 140–146 (QLYFNPA) are Lumenal-facing. The chain crosses the membrane as a helical span at residues 147–167 (TVKMLGNLKVLVIAVLLKVIM). The Cytoplasmic segment spans residues 168-170 (RRR). Residues 171–191 (FSTIQWEALALLLIGISVNQL) traverse the membrane as a helical segment. Over 192 to 202 (KSLPEGSSTLG) the chain is Lumenal. The helical transmembrane segment at 203–223 (LPVAAGAYLYTLFFVTVPALA) threads the bilayer. Residues 224 to 243 (SVYNEKALKSQFDTSIYLQN) lie on the Cytoplasmic side of the membrane. A helical transmembrane segment spans residues 244 to 264 (LFLYGYGAIFNFLGLVITAII). At 265-280 (QGPSSFNILEGHSKAT) the chain is on the lumenal side. Residues 281 to 301 (MFLICNNAAQGILSSFFFKYA) traverse the membrane as a helical segment. The Cytoplasmic portion of the chain corresponds to 302–321 (DTILKKYSSTIATIFTGVAS). Residues 322–342 (AVLFGHTLTINFVLAISIVII) form a helical membrane-spanning segment. Topologically, residues 343–402 (SMHQYLSNQIKDEVPSSKIEMGDAHEHRSKESVVVNVSDSIATEAKHRHGTDERQPLLPV) are lumenal.

The protein belongs to the nucleotide-sugar transporter family. CMP-Sialate:CMP antiporter (TC 2.A.7.12) subfamily.

It is found in the golgi apparatus membrane. Functionally, sugar transporter involved in the transport of CMP-sialic acid from the cytoplasm into the Golgi. May transport important nucleotide sugars such as CMP-Kdo (2-keto-3-deoxy-D-manno-octulosonic acid) in physiological conditions. In Oryza sativa subsp. indica (Rice), this protein is CMP-sialic acid transporter 3.